Consider the following 43-residue polypeptide: Protein PsbN (43 aa).

The helical transmembrane segment at T5–F27 threads the bilayer.

This sequence belongs to the PsbN family.

Its subcellular location is the plastid. The protein localises to the chloroplast thylakoid membrane. In terms of biological role, may play a role in photosystem I and II biogenesis. The sequence is that of Protein PsbN from Drimys granadensis.